The following is a 243-amino-acid chain: Terpene cyclase ptmB (243 aa).

Transmembrane regions (helical) follow at residues 19–39, 48–68, and 78–98; these read IANLFVLGMGLGWLINYVGMI, YGMAIMPLCCNIAWEIVYSLI, and GVFIAGLTINIGVMYAAIKFA. The N-linked (GlcNAc...) asparagine glycan is linked to Asn-111. Helical transmembrane passes span 112-132, 137-157, 172-194, and 205-225; these read LSLIFFLATLGFLTGHLALAA, SLAYSWGAVVCQLLLSVGGLC, LWLSRFLGSSCTVGFASLRWMYW, and LVLWSLALFLTVDGSYGICYW.

The protein belongs to the paxB family.

It localises to the membrane. The protein operates within secondary metabolite biosynthesis. Terpene cyclase; part of the gene cluster that mediates the biosynthesis of the indole diterpenes penitrems. The geranylgeranyl diphosphate (GGPP) synthase ptmG catalyzes the first step in penitrem biosynthesis via conversion of farnesyl pyrophosphate and isopentyl pyrophosphate into geranylgeranyl pyrophosphate (GGPP). Condensation of indole-3-glycerol phosphate with GGPP by the prenyl transferase ptmC then forms 3-geranylgeranylindole (3-GGI). Epoxidation by the FAD-dependent monooxygenase ptmM leads to a epoxidized-GGI that is substrate of the terpene cyclase ptmB for cyclization to yield paspaline. Paspaline is subsequently converted to 13-desoxypaxilline by the cytochrome P450 monooxygenase ptmP, the latter being then converted to paxilline by the cytochrome P450 monooxygenase ptmQ. Paxilline is converted to beta-paxitriol via C-10 ketoreduction by the short-chain dehydrogenase ptmH which can be monoprenylated at the C-20 by the indole diterpene prenyltransferase ptmD. A two-step elimination (acetylation and elimination) process performed by the O-acetyltransferase ptmV and ptmI leads to the production of the prenylated form of penijanthine. The FAD-linked oxidoreductase ptmO then converts the prenylated form of penijanthine into PC-M5 which is in turn transformed into PC-M4 by the aromatic dimethylallyltransferase ptmE. Five sequential oxidative transformations performed by the cytochrome P450 monooxygenases ptmK, ptmU, ptmL, ptmN and ptmJ yield the various penitrem compounds. PtmK, ptmU and ptmM are involved in the formation of the key bicyclic ring of penitrem C via the formation of the intermediates secopenitrem D and penitrem D. PtmL catalyzes the epoxidation of penitrem D and C to yield penitrem B and F, respectively. PtmJ catalyzes the last benzylic hydroxylation to convert penitrem B to prenitrem E and penitrem F to penitrem A. This is Terpene cyclase ptmB from Penicillium ochrochloron.